The primary structure comprises 106 residues: MMIVTTDRIDGYNVKAVKGYVKGSTVQTKHIGRDITAGLKGLVGGEIKGYSEMMDEARKLAIHRMAQDAEAKGANAVIGFRLQTSTVMANAAEIIAYGTAVEVEKE.

This sequence belongs to the UPF0145 family.

This Halalkalibacterium halodurans (strain ATCC BAA-125 / DSM 18197 / FERM 7344 / JCM 9153 / C-125) (Bacillus halodurans) protein is UPF0145 protein BH0643.